We begin with the raw amino-acid sequence, 307 residues long: tRNA dimethylallyltransferase (307 aa).

10–17 (GPTAVGKT) provides a ligand contact to ATP. 12–17 (TAVGKT) serves as a coordination point for substrate. Positions 35–38 (DSMQ) are interaction with substrate tRNA.

Belongs to the IPP transferase family. In terms of assembly, monomer. Requires Mg(2+) as cofactor.

It catalyses the reaction adenosine(37) in tRNA + dimethylallyl diphosphate = N(6)-dimethylallyladenosine(37) in tRNA + diphosphate. Its function is as follows. Catalyzes the transfer of a dimethylallyl group onto the adenine at position 37 in tRNAs that read codons beginning with uridine, leading to the formation of N6-(dimethylallyl)adenosine (i(6)A). In Ligilactobacillus salivarius (strain UCC118) (Lactobacillus salivarius), this protein is tRNA dimethylallyltransferase.